Here is a 244-residue protein sequence, read N- to C-terminus: Geranylgeranylglyceryl phosphate synthase (244 aa).

The Mg(2+) site is built by Asp21 and Thr50. Sn-glycerol 1-phosphate contacts are provided by residues 168 to 174 (YLEAGSG), 200 to 201 (GG), and 222 to 223 (GN).

Belongs to the GGGP/HepGP synthase family. Group II subfamily. Mg(2+) is required as a cofactor.

The protein resides in the cytoplasm. The enzyme catalyses sn-glycerol 1-phosphate + (2E,6E,10E)-geranylgeranyl diphosphate = sn-3-O-(geranylgeranyl)glycerol 1-phosphate + diphosphate. It participates in membrane lipid metabolism; glycerophospholipid metabolism. Prenyltransferase that catalyzes the transfer of the geranylgeranyl moiety of geranylgeranyl diphosphate (GGPP) to the C3 hydroxyl of sn-glycerol-1-phosphate (G1P). This reaction is the first ether-bond-formation step in the biosynthesis of archaeal membrane lipids. This Sulfurisphaera tokodaii (strain DSM 16993 / JCM 10545 / NBRC 100140 / 7) (Sulfolobus tokodaii) protein is Geranylgeranylglyceryl phosphate synthase.